The following is a 445-amino-acid chain: KIN17-like protein (445 aa).

The C2H2-type zinc finger occupies 26–50; the sequence is WYCQLCEKQCRDENGFKCHISSESH. Low complexity-rich tracts occupy residues 215 to 229 and 239 to 253; these read NTTT…TTTN and NDNN…DQTN. The interval 215-256 is disordered; it reads NTTTTTTNTTTTTTNKNIFDKLKTNDNNSSNNNYNDQTNPKP.

The protein belongs to the KIN17 family.

This Dictyostelium discoideum (Social amoeba) protein is KIN17-like protein.